Here is a 143-residue protein sequence, read N- to C-terminus: Large ribosomal subunit protein bL28c (143 aa).

The N-terminal 66 residues, 1 to 66 (MTTMATQGAW…SFPGIQPIVA (66 aa)), are a transit peptide targeting the chloroplast.

This sequence belongs to the bacterial ribosomal protein bL28 family. Part of the 50S ribosomal subunit.

Its subcellular location is the plastid. It localises to the chloroplast. The chain is Large ribosomal subunit protein bL28c (RPL28) from Arabidopsis thaliana (Mouse-ear cress).